The sequence spans 118 residues: Alpha-amylase inhibitor 4 (118 aa).

4 cysteine pairs are disulfide-bonded: Cys-7-Cys-60, Cys-21-Cys-49, Cys-30-Cys-82, and Cys-50-Cys-101.

It belongs to the protease inhibitor I6 (cereal trypsin/alpha-amylase inhibitor) family.

It localises to the secreted. Alpha-amylase inhibitor. The sequence is that of Alpha-amylase inhibitor 4 from Sorghum bicolor (Sorghum).